The primary structure comprises 292 residues: Nucleotide-binding protein SACE_2139 (292 aa).

Residue 15–22 coordinates ATP; it reads GLSGAGRS. 66 to 69 is a GTP binding site; it reads DVRS.

It belongs to the RapZ-like family.

In terms of biological role, displays ATPase and GTPase activities. This chain is Nucleotide-binding protein SACE_2139, found in Saccharopolyspora erythraea (strain ATCC 11635 / DSM 40517 / JCM 4748 / NBRC 13426 / NCIMB 8594 / NRRL 2338).